A 254-amino-acid chain; its full sequence is Alcohol dehydrogenase 1 (254 aa).

10-33 (FVAGLGGIGFDTSREIVKSGPKNL) lines the NAD(+) pocket. Residue serine 138 participates in substrate binding. The Proton acceptor role is filled by tyrosine 151.

Belongs to the short-chain dehydrogenases/reductases (SDR) family. As to quaternary structure, homodimer.

The enzyme catalyses a primary alcohol + NAD(+) = an aldehyde + NADH + H(+). The catalysed reaction is a secondary alcohol + NAD(+) = a ketone + NADH + H(+). The sequence is that of Alcohol dehydrogenase 1 (Adh1) from Drosophila navojoa (Fruit fly).